The chain runs to 268 residues: Esterase PIR7B (268 aa).

The active-site Acyl-ester intermediate is Ser-86. Active-site charge relay system residues include Asp-218 and His-246.

Belongs to the AB hydrolase superfamily.

Its function is as follows. Exhibits esterase activity towards naphthol AS-acetate in vitro. This is Esterase PIR7B (PIR7B) from Oryza sativa subsp. japonica (Rice).